A 438-amino-acid chain; its full sequence is MIRVLHLAPEAYPLAKVGGLADVVGALPKALRPLGVEAHVLLPWHGGLEARRVGEVAFAFFGREERAPLGERVEGGVRFLLLGVEGFGRERVYGYPDDAERYLRFALAAKEVARGYDLVHAHDWTAALLALYAPTVYTIHNLAHQGLVDPGLFFSWTGLPWSLFHMEALEFYGRVNLMKGGIVFARRVTTVRPSYAEEIQTPEFGMGLDGVLRRHAGKLRGILNGLDTEVFDPGKDPYLPAPYTREDPSGKARAKEVFRERTGLRPPVLAYVGRLDYQKGLDLVLKALPRLLEMGFRLYVQGVGDGGLQEAFLRAEEENPEGVRFLPAYDEAMARLAYAGAEAVLVPSRFEPCGLVQMIASRYGTPPVARAVGGLKDTVEDGRAGVLFETYHPEGLLYGVLRLFRLGAEEMGLRAMEKDFSWEGPARAYREVYREALG.

Position 16 (Lys16) interacts with ADP-alpha-D-glucose.

This sequence belongs to the glycosyltransferase 1 family. Bacterial/plant glycogen synthase subfamily.

The enzyme catalyses [(1-&gt;4)-alpha-D-glucosyl](n) + ADP-alpha-D-glucose = [(1-&gt;4)-alpha-D-glucosyl](n+1) + ADP + H(+). It participates in glycan biosynthesis; glycogen biosynthesis. Its function is as follows. Synthesizes alpha-1,4-glucan chains using ADP-glucose. The sequence is that of Glycogen synthase from Thermus caldophilus.